We begin with the raw amino-acid sequence, 466 residues long: UDP-N-acetylmuramate--L-alanine ligase (466 aa).

Position 114–120 (114–120 (GTHGKTT)) interacts with ATP.

It belongs to the MurCDEF family.

It is found in the cytoplasm. It carries out the reaction UDP-N-acetyl-alpha-D-muramate + L-alanine + ATP = UDP-N-acetyl-alpha-D-muramoyl-L-alanine + ADP + phosphate + H(+). Its pathway is cell wall biogenesis; peptidoglycan biosynthesis. Cell wall formation. In Mesorhizobium japonicum (strain LMG 29417 / CECT 9101 / MAFF 303099) (Mesorhizobium loti (strain MAFF 303099)), this protein is UDP-N-acetylmuramate--L-alanine ligase.